The primary structure comprises 124 residues: Large ribosomal subunit protein bL21 (124 aa).

A disordered region spans residues 105 to 124; that stretch reads TVKAEPKSKRAPAPEAAADA. Residues 115-124 are compositionally biased toward low complexity; sequence APAPEAAADA.

Belongs to the bacterial ribosomal protein bL21 family. In terms of assembly, part of the 50S ribosomal subunit. Contacts protein L20.

Functionally, this protein binds to 23S rRNA in the presence of protein L20. This Xanthobacter autotrophicus (strain ATCC BAA-1158 / Py2) protein is Large ribosomal subunit protein bL21.